Consider the following 649-residue polypeptide: Leucine-rich repeat transmembrane protein FLRT3 (649 aa).

The N-terminal stretch at 1–28 (MISAAWSIFLIGTKIGLFLQVAPLSVMA) is a signal peptide. One can recognise an LRRNT domain in the interval 29–58 (KSCPSVCRCDAGFIYCNDRFLTSIPTGIPE). Residues 29-528 (KSCPSVCRCD…KEPYKNPNLP (500 aa)) lie on the Extracellular side of the membrane. Cystine bridges form between C31–C37 and C35–C44. The segment at 38 to 67 (DAGFIYCNDRFLTSIPTGIPEDATTLYLQN) is interaction with ADGRL3. LRR repeat units follow at residues 59–80 (DATTLYLQNNQINNAGIPSDLK), 84–104 (KVERIYLYHNSLDEFPTNLPK), 105–126 (YVKELHLQENNIRTITYDSLSK), 129–150 (YLEELHLDDNSVSAVSIEEGAF), 155–175 (YLRLLFLSRNHLSTIPWGLPR), 176–197 (TIEELRLDDNRISTISSPSLQG), 200–220 (SLKRLVLDGNLLNNHGLGDKV), 226–247 (NLTELSLVRNSLTAAPVNLPGT), 248–269 (NLRKLYLQDNHINRVPPNAFSY), and 272–293 (QLYRLDMSNNNLSNLPQGIFDD). An N-linked (GlcNAc...) asparagine glycan is attached at N226. N282 and N296 each carry an N-linked (GlcNAc...) asparagine glycan. One can recognise an LRRCT domain in the interval 305 to 357 (NPWYCGCKMKWVRDWLQSLPVKVNVRGLMCQAPEKVRGMAIKDLNAELFDCKD). A disulfide bridge connects residues C309 and C334. Residues 387-407 (KQPDIKNPKLTKDHQTTGSPS) form a disordered region. Residues 389–401 (PDIKNPKLTKDHQ) are compositionally biased toward basic and acidic residues. The Fibronectin type-III domain maps to 409–504 (KTITITVKSV…VCIETETAPL (96 aa)). A helical membrane pass occupies residues 529–549 (LAAIIGGAVALVTIALLALVC). Residues 550 to 649 (WYVHRNGSLF…GIPDSDHSHS (100 aa)) are Cytoplasmic-facing. The tract at residues 622 to 649 (LYKNNHSESSSNRSYRDSGIPDSDHSHS) is disordered.

Monomer and homodimer. Self-associates (via leucine-rich repeats), giving rise to homooligomers. Interacts with FGFR1. Interacts (via extracellular domain) with ADGRL1/LPHN1 and LPHN2 (via olfactomedin-like domain). Interacts (via extracellular domain) with ADGRL3 (via olfactomedin-like domain); the interaction is direct. Interacts (via extracellular domain) with UNC5B and UNC5D (via extracellular domain); the interaction is direct. Identified in complexes composed of FLRT3, ADGRL3 and UNC5B, respectively FLRT3, ADGRL3 and UNC5D. May also interact (via extracellular domain) with UNC5A and UNC5C. Interacts (via cytoplasmic domain) with ROBO1. N-glycosylated. In terms of processing, proteolytic cleavage in the juxtamembrane region gives rise to a soluble ectodomain. Cleavage is probably effected by a metalloprotease. As to expression, expressed in kidney, brain, pancreas, skeletal muscle, lung, liver, placenta, and heart.

The protein localises to the cell membrane. The protein resides in the presynaptic cell membrane. Its subcellular location is the endoplasmic reticulum membrane. It is found in the cell junction. It localises to the focal adhesion. The protein localises to the secreted. The protein resides in the cell projection. Its subcellular location is the axon. It is found in the growth cone membrane. Functions in cell-cell adhesion, cell migration and axon guidance, exerting an attractive or repulsive role depending on its interaction partners. Plays a role in the spatial organization of brain neurons. Plays a role in vascular development in the retina. Plays a role in cell-cell adhesion via its interaction with ADGRL3 and probably also other latrophilins that are expressed at the surface of adjacent cells. Interaction with the intracellular domain of ROBO1 mediates axon attraction towards cells expressing NTN1. Mediates axon growth cone collapse and plays a repulsive role in neuron guidance via its interaction with UNC5B, and possibly also other UNC-5 family members. Promotes neurite outgrowth (in vitro). Mediates cell-cell contacts that promote an increase both in neurite number and in neurite length. Plays a role in the regulation of the density of glutamaergic synapses. Plays a role in fibroblast growth factor-mediated signaling cascades. Required for normal morphogenesis during embryonic development, but not for normal embryonic patterning. Required for normal ventral closure, headfold fusion and definitive endoderm migration during embryonic development. Required for the formation of a normal basement membrane and the maintenance of a normal anterior visceral endoderm during embryonic development. The chain is Leucine-rich repeat transmembrane protein FLRT3 (FLRT3) from Homo sapiens (Human).